The following is a 212-amino-acid chain: Large ribosomal subunit protein mL48 (212 aa).

The N-terminal 28 residues, 1 to 28, are a transit peptide targeting the mitochondrion; that stretch reads MSGTLEKVLCLRNNTIFKQAFSLLRFRT. The residue at position 199 (Lys-199) is an N6-succinyllysine.

It belongs to the mitochondrion-specific ribosomal protein mL48 family. In terms of assembly, component of the mitochondrial large ribosomal subunit (mt-LSU). Mature mammalian 55S mitochondrial ribosomes consist of a small (28S) and a large (39S) subunit. The 28S small subunit contains a 12S ribosomal RNA (12S mt-rRNA) and 30 different proteins. The 39S large subunit contains a 16S rRNA (16S mt-rRNA), a copy of mitochondrial valine transfer RNA (mt-tRNA(Val)), which plays an integral structural role, and 52 different proteins. mL48 is located at the central protuberance. Interacts with OXA1L.

The protein localises to the mitochondrion. This is Large ribosomal subunit protein mL48 (MRPL48) from Homo sapiens (Human).